Reading from the N-terminus, the 1578-residue chain is Pentafunctional AROM polypeptide (1578 aa).

The interval 1–393 is 3-dehydroquinate synthase; sequence MSVELAKVSI…YGTSAHVVSD (393 aa). Residues 44 to 46, 79 to 82, 110 to 112, and Asp115 contribute to the NAD(+) site; these read DTN, EAHK, and GGV. Arg126 contributes to the 7-phospho-2-dehydro-3-deoxy-D-arabino-heptonate binding site. Residue 135-136 coordinates NAD(+); sequence TS. Asp142 and Lys148 together coordinate 7-phospho-2-dehydro-3-deoxy-D-arabino-heptonate. Residue Lys157 coordinates NAD(+). Asn158 is a 7-phospho-2-dehydro-3-deoxy-D-arabino-heptonate binding site. NAD(+)-binding positions include 175 to 178 and Asn186; that span reads WLET. Glu190 lines the Zn(2+) pocket. 7-phospho-2-dehydro-3-deoxy-D-arabino-heptonate contacts are provided by residues 190-193 and Lys259; that span reads EVIK. Glu269 serves as the catalytic Proton acceptor; for 3-dehydroquinate synthase activity. 7-phospho-2-dehydro-3-deoxy-D-arabino-heptonate is bound by residues 273–277 and His280; that span reads RNLLN. His280 is a binding site for Zn(2+). His284 functions as the Proton acceptor; for 3-dehydroquinate synthase activity in the catalytic mechanism. The 7-phospho-2-dehydro-3-deoxy-D-arabino-heptonate site is built by His296 and Lys365. Position 296 (His296) interacts with Zn(2+). An EPSP synthase region spans residues 406-863; the sequence is VHPFNNIPEG…WDVLHSQLGA (458 aa). Residue Cys845 is the For EPSP synthase activity of the active site. Residues 882 to 1071 are shikimate kinase; sequence VVIIGMRAAG…VPSRRSAFVC (190 aa). 886–893 serves as a coordination point for ATP; the sequence is GMRAAGKS. A 3-dehydroquinase region spans residues 1072–1284; that stretch reads LTFEDLSDHL…AAPGQLTLAE (213 aa). Residue His1189 is the Proton acceptor; for 3-dehydroquinate dehydratase activity of the active site. Catalysis depends on Lys1218, which acts as the Schiff-base intermediate with substrate; for 3-dehydroquinate dehydratase activity. The tract at residues 1297–1578 is shikimate dehydrogenase; sequence AKKFFVIGSP…KAIFDAVTQE (282 aa).

The protein in the N-terminal section; belongs to the sugar phosphate cyclases superfamily. Dehydroquinate synthase family. This sequence in the 2nd section; belongs to the EPSP synthase family. It in the 3rd section; belongs to the shikimate kinase family. In the 4th section; belongs to the type-I 3-dehydroquinase family. The protein in the C-terminal section; belongs to the shikimate dehydrogenase family. Homodimer. The cofactor is Zn(2+).

The protein resides in the cytoplasm. The enzyme catalyses 7-phospho-2-dehydro-3-deoxy-D-arabino-heptonate = 3-dehydroquinate + phosphate. The catalysed reaction is 3-dehydroquinate = 3-dehydroshikimate + H2O. It catalyses the reaction shikimate + NADP(+) = 3-dehydroshikimate + NADPH + H(+). It carries out the reaction shikimate + ATP = 3-phosphoshikimate + ADP + H(+). The enzyme catalyses 3-phosphoshikimate + phosphoenolpyruvate = 5-O-(1-carboxyvinyl)-3-phosphoshikimate + phosphate. It participates in metabolic intermediate biosynthesis; chorismate biosynthesis; chorismate from D-erythrose 4-phosphate and phosphoenolpyruvate: step 2/7. Its pathway is metabolic intermediate biosynthesis; chorismate biosynthesis; chorismate from D-erythrose 4-phosphate and phosphoenolpyruvate: step 3/7. The protein operates within metabolic intermediate biosynthesis; chorismate biosynthesis; chorismate from D-erythrose 4-phosphate and phosphoenolpyruvate: step 4/7. It functions in the pathway metabolic intermediate biosynthesis; chorismate biosynthesis; chorismate from D-erythrose 4-phosphate and phosphoenolpyruvate: step 5/7. It participates in metabolic intermediate biosynthesis; chorismate biosynthesis; chorismate from D-erythrose 4-phosphate and phosphoenolpyruvate: step 6/7. In terms of biological role, the AROM polypeptide catalyzes 5 consecutive enzymatic reactions in prechorismate polyaromatic amino acid biosynthesis. This is Pentafunctional AROM polypeptide from Kluyveromyces lactis (strain ATCC 8585 / CBS 2359 / DSM 70799 / NBRC 1267 / NRRL Y-1140 / WM37) (Yeast).